Reading from the N-terminus, the 240-residue chain is Adenosylcobinamide-GDP ribazoletransferase (240 aa).

A run of 5 helical transmembrane segments spans residues 31-51, 62-81, 109-129, 133-153, and 179-199; these read LLYY…ASHL, ALLL…DGLA, IAVV…WVLV, IGAQ…GLFL, and VLLV…LLAL.

Belongs to the CobS family. It depends on Mg(2+) as a cofactor.

Its subcellular location is the cell inner membrane. The catalysed reaction is alpha-ribazole + adenosylcob(III)inamide-GDP = adenosylcob(III)alamin + GMP + H(+). It catalyses the reaction alpha-ribazole 5'-phosphate + adenosylcob(III)inamide-GDP = adenosylcob(III)alamin 5'-phosphate + GMP + H(+). Its pathway is cofactor biosynthesis; adenosylcobalamin biosynthesis; adenosylcobalamin from cob(II)yrinate a,c-diamide: step 7/7. Joins adenosylcobinamide-GDP and alpha-ribazole to generate adenosylcobalamin (Ado-cobalamin). Also synthesizes adenosylcobalamin 5'-phosphate from adenosylcobinamide-GDP and alpha-ribazole 5'-phosphate. The polypeptide is Adenosylcobinamide-GDP ribazoletransferase (Pseudomonas putida (strain ATCC 47054 / DSM 6125 / CFBP 8728 / NCIMB 11950 / KT2440)).